The chain runs to 237 residues: CD63 antigen (237 aa).

Over 1–11 (MAVEGGMKCVK) the chain is Cytoplasmic. Residues 12–32 (FLLYVLLLVFCACAVGLIAVG) traverse the membrane as a helical segment. The Extracellular segment spans residues 33–51 (VGTHLVLNQTITHGATPSF). N40 is a glycosylation site (N-linked (GlcNAc...) asparagine). A helical transmembrane segment spans residues 52–72 (LLPVVIIAVGAFLFLVAFVGC). At 73–81 (CGACKENYC) the chain is on the cytoplasmic side. A helical transmembrane segment spans residues 82-102 (LMITFAIFLSLIMLVEVAAAI). The Extracellular portion of the chain corresponds to 103–202 (AGYVFRDKVR…KIAAWLRKNV (100 aa)). N-linked (GlcNAc...) asparagine glycans are attached at residues N130, N150, and N171. The chain crosses the membrane as a helical span at residues 203-223 (LVVAAAALGIAFVEILGIVLA). At 224 to 237 (CCLVKSIRSGYEVM) the chain is on the cytoplasmic side. The Lysosomal targeting motif signature appears at 233–237 (GYEVM).

Belongs to the tetraspanin (TM4SF) family. In terms of assembly, interacts with TIMP1 and ITGB1 and recruits TIMP1 to ITGB1. Interacts with CD9. Identified in a complex with CD9 and ITGB3. Interacts with PMEL. Interacts with KDR/VEGFR2; identified in a complex with ITGB1 and KDR/VEGFR2 and is required to recruit KDR to ITGB1 complexes. Interacts with SYT7. Palmitoylated at a low, basal level in unstimulated platelets. The level of palmitoylation increases when platelets are activated by thrombin (in vitro).

The protein localises to the cell membrane. It is found in the lysosome membrane. The protein resides in the late endosome membrane. Its subcellular location is the endosome. It localises to the multivesicular body. The protein localises to the melanosome. It is found in the secreted. The protein resides in the extracellular exosome. Its subcellular location is the cell surface. Functionally, functions as a cell surface receptor for TIMP1 and plays a role in the activation of cellular signaling cascades. Plays a role in the activation of ITGB1 and integrin signaling, leading to the activation of AKT, FAK/PTK2 and MAP kinases. Promotes cell survival, reorganization of the actin cytoskeleton, cell adhesion, spreading and migration, via its role in the activation of AKT and FAK/PTK2. Plays a role in VEGFA signaling via its role in regulating the internalization of KDR/VEGFR2. Plays a role in intracellular vesicular transport processes, and is required for normal trafficking of the PMEL luminal domain that is essential for the development and maturation of melanocytes. Plays a role in the adhesion of leukocytes onto endothelial cells via its role in the regulation of SELP trafficking. May play a role in mast cell degranulation in response to Ms4a2/FceRI stimulation, but not in mast cell degranulation in response to other stimuli. This chain is CD63 antigen (CD63), found in Bos taurus (Bovine).